A 325-amino-acid polypeptide reads, in one-letter code: MTTVLAIETSCDETSVAIVKNRQVLSNIVKSQINIHSFYGGVVPEVASRQHLEIINQAIAQAFREANLDWPDIDGIGATCAPGLVGALLVGLTAAKTLAIVHEKPFVGVHHLEGHIYATYLSQPELVPPFLCLLVSGGHTSLIYVKNCGEYETLGQTRDDAAGEAFDKVARLLKLGYPGGPVIDKLAAEGNKLAFSLPEGKISLPGGGYHPYDFSFSGLKTAVLRLVQKIEQEGNELLSGSSVTKDIAASFQETVAKGLTKRAIACALDYSLNTIAIGGGVAANSSLRQHLSRAVESHNLQVLFPSLRFCTDNAAMIGCVRLVGH.

H111 and H115 together coordinate Fe cation. Substrate contacts are provided by residues 134-138, D167, G180, D184, and N284; that span reads LVSGG. D312 provides a ligand contact to Fe cation.

Belongs to the KAE1 / TsaD family. The cofactor is Fe(2+).

The protein localises to the cytoplasm. It carries out the reaction L-threonylcarbamoyladenylate + adenosine(37) in tRNA = N(6)-L-threonylcarbamoyladenosine(37) in tRNA + AMP + H(+). Its function is as follows. Required for the formation of a threonylcarbamoyl group on adenosine at position 37 (t(6)A37) in tRNAs that read codons beginning with adenine. Is involved in the transfer of the threonylcarbamoyl moiety of threonylcarbamoyl-AMP (TC-AMP) to the N6 group of A37, together with TsaE and TsaB. TsaD likely plays a direct catalytic role in this reaction. The chain is tRNA N6-adenosine threonylcarbamoyltransferase from Trichodesmium erythraeum (strain IMS101).